The primary structure comprises 528 residues: MTDVVPDSNAPAYSVSELAFALKRTLETSYAFVRLRGELSKVTHHGNGHVYLTIKDDKSAIDGVVWKGNVRGLGIRPEHGLEVIVTGKITTYPAGSRYQIVIETMEAAGVGALLAQLERLKAKLNAEGLFAPDRKRPLPSMPAVVGVITSPTGAVIRDILHRIRDRWPCQVLVWPCVVQGDAAAGQVSAAIRGFNALTPGGPVPRPDILIVARGGGSVEDLWAFNDEGLARTVAEGTIPLISAVGHETDTTLIDFVSDRRAPTPTAAAEMATPVLAELRALVSDYDRRLNNCGGRAVEERRTRLTSAARGLPRPADLLALAQQRLDLAVRGLPRLDDLTAPAERRFKEAAARLDTALQRNTDIHARDLLKVTARLSPDTLHRQRADAGRRVGDLGRRLDLAARRVPERVAQHARLPALQDRLNAVARRRLERETDRLAGLEKLRQSLNPTRPLELGFALVHKADGGIARSASELASGERVRLQFRQGDRDAVIDGESSGVLPPSAAPAPTRPTPRPKPASSSDQGSLF.

The interval 486 to 528 is disordered; it reads QGDRDAVIDGESSGVLPPSAAPAPTRPTPRPKPASSSDQGSLF. Pro residues predominate over residues 504–517; it reads SAAPAPTRPTPRPK.

It belongs to the XseA family. Heterooligomer composed of large and small subunits.

The protein resides in the cytoplasm. The catalysed reaction is Exonucleolytic cleavage in either 5'- to 3'- or 3'- to 5'-direction to yield nucleoside 5'-phosphates.. Bidirectionally degrades single-stranded DNA into large acid-insoluble oligonucleotides, which are then degraded further into small acid-soluble oligonucleotides. The sequence is that of Exodeoxyribonuclease 7 large subunit from Caulobacter sp. (strain K31).